Here is a 411-residue protein sequence, read N- to C-terminus: MNYGEKAPALWDAIKNEEKRQEDTIELIASENIVSDAVREAQGSVLTNKYAEGYPGKRYYGGCQYIDQVEQLAIDYAKKLFNAEYANVQPHSGSQANMTVYNALLKPGDTILGMGMDAGGHLTHGSKVNFSGKIFNSVSYDLNPETEELDFEKIRQIALENKPKLIIAGASAYSRIIDWQKFREIADEVGAYLMVDMAHIAGLVATGAHPSPIPVADVVTTTTHKTLRGPRGGMILSNNKKLGKKIDSALFPGTQGGPLEHVIAAKAQAFYEDLQPEFSTYIEQVVKNAQAMADEFKKSENIRVVSGGTDNHLMIVDITKTGVTGKDAQNLLDSVNITTNKESIPGDTRSPFITSGLRIGTPAITSRGFKENDAREVARIIIKVLDNPEDKDVLTEAKSSVKSLVDKHQIK.

A (6S)-5,6,7,8-tetrahydrofolate-binding site is contributed by 120–122; that stretch reads GHL. At lysine 225 the chain carries N6-(pyridoxal phosphate)lysine. Residue 350–352 coordinates (6S)-5,6,7,8-tetrahydrofolate; that stretch reads SPF.

The protein belongs to the SHMT family. As to quaternary structure, homodimer. It depends on pyridoxal 5'-phosphate as a cofactor.

The protein localises to the cytoplasm. It catalyses the reaction (6R)-5,10-methylene-5,6,7,8-tetrahydrofolate + glycine + H2O = (6S)-5,6,7,8-tetrahydrofolate + L-serine. Its pathway is one-carbon metabolism; tetrahydrofolate interconversion. It participates in amino-acid biosynthesis; glycine biosynthesis; glycine from L-serine: step 1/1. Its function is as follows. Catalyzes the reversible interconversion of serine and glycine with tetrahydrofolate (THF) serving as the one-carbon carrier. This reaction serves as the major source of one-carbon groups required for the biosynthesis of purines, thymidylate, methionine, and other important biomolecules. Also exhibits THF-independent aldolase activity toward beta-hydroxyamino acids, producing glycine and aldehydes, via a retro-aldol mechanism. This Lactobacillus gasseri (strain ATCC 33323 / DSM 20243 / BCRC 14619 / CIP 102991 / JCM 1131 / KCTC 3163 / NCIMB 11718 / NCTC 13722 / AM63) protein is Serine hydroxymethyltransferase.